A 488-amino-acid chain; its full sequence is Ribulose bisphosphate carboxylase large chain (488 aa).

Substrate is bound by residues asparagine 127 and threonine 177. Lysine 179 serves as the catalytic Proton acceptor. Lysine 181 serves as a coordination point for substrate. 3 residues coordinate Mg(2+): lysine 205, aspartate 207, and glutamate 208. Lysine 205 is subject to N6-carboxylysine. Histidine 297 acts as the Proton acceptor in catalysis. Substrate-binding residues include arginine 298, histidine 330, and serine 382.

This sequence belongs to the RuBisCO large chain family. Type I subfamily. In terms of assembly, heterohexadecamer of 8 large chains and 8 small chains. It depends on Mg(2+) as a cofactor.

Its subcellular location is the plastid. The protein localises to the chloroplast. It catalyses the reaction 2 (2R)-3-phosphoglycerate + 2 H(+) = D-ribulose 1,5-bisphosphate + CO2 + H2O. The catalysed reaction is D-ribulose 1,5-bisphosphate + O2 = 2-phosphoglycolate + (2R)-3-phosphoglycerate + 2 H(+). RuBisCO catalyzes two reactions: the carboxylation of D-ribulose 1,5-bisphosphate, the primary event in carbon dioxide fixation, as well as the oxidative fragmentation of the pentose substrate in the photorespiration process. Both reactions occur simultaneously and in competition at the same active site. In Porphyra umbilicalis (Purple laver), this protein is Ribulose bisphosphate carboxylase large chain (rbcL).